Reading from the N-terminus, the 235-residue chain is Glycerol-3-phosphate acyltransferase (235 aa).

The next 6 membrane-spanning stretches (helical) occupy residues Phe2–Ile22, Thr56–Phe76, Leu94–Gly114, Phe126–Leu146, Val152–Phe172, and Phe190–Ile210.

It belongs to the PlsY family. Probably interacts with PlsX.

The protein resides in the cell inner membrane. The enzyme catalyses an acyl phosphate + sn-glycerol 3-phosphate = a 1-acyl-sn-glycero-3-phosphate + phosphate. The protein operates within lipid metabolism; phospholipid metabolism. Its function is as follows. Catalyzes the transfer of an acyl group from acyl-phosphate (acyl-PO(4)) to glycerol-3-phosphate (G3P) to form lysophosphatidic acid (LPA). This enzyme utilizes acyl-phosphate as fatty acyl donor, but not acyl-CoA or acyl-ACP. This chain is Glycerol-3-phosphate acyltransferase, found in Chlorobium phaeobacteroides (strain BS1).